The chain runs to 368 residues: High affinity iron permease 1 (368 aa).

Transmembrane regions (helical) follow at residues 8–28 (VPIF…ISVL), 50–70 (VWIG…AFIA), 86–106 (IWEG…GLAM), 142–162 (AFFV…VVFI), 173–193 (SIPI…FLIY), 204–224 (FFVF…AKGV), and 287–307 (SIIS…FSYF). The interval 346-368 (DKESDEEANNHPKEKIESDAIKA) is disordered. Residues 353-368 (ANNHPKEKIESDAIKA) are compositionally biased toward basic and acidic residues.

Belongs to the oxidase-dependent Fe transporter (OFeT) (TC 9.A.10.1) family.

The protein resides in the cell membrane. High affinity iron permease required for iron uptake in iron-depleted environments. Required for full virulence in mice. The chain is High affinity iron permease 1 from Rhizopus delemar (strain RA 99-880 / ATCC MYA-4621 / FGSC 9543 / NRRL 43880) (Mucormycosis agent).